Reading from the N-terminus, the 326-residue chain is Zinc-dependent endopolyphosphatase (326 aa).

Residues 1 to 9 (MEDKRKRRA) are Cytoplasmic-facing. Residues 10–30 (ATLSTALILFVACCVYTLYIF) traverse the membrane as a helical segment. The Vacuolar portion of the chain corresponds to 31–326 (KFDNPRLSPP…DYELIQVQCS (296 aa)). Asn-90 and Asn-241 each carry an N-linked (GlcNAc...) asparagine glycan.

This sequence belongs to the metallophosphoesterase superfamily. As to quaternary structure, interacts with PPN1. Requires Zn(2+) as cofactor. It depends on Co(2+) as a cofactor. Mg(2+) serves as cofactor.

Its subcellular location is the vacuole membrane. It carries out the reaction [phosphate](n+1) + n H2O = (n+1) phosphate + n H(+). Not sensitive to heparin inhibition. In terms of biological role, catalyzes the hydrolysis of inorganic polyphosphate (polyP) chains of many hundreds of phosphate residues into shorter lengths. Exclusively shows endopolyphosphatase activity, cleaving inside the polyP chain. Together with PPN1, responsible for a substantial fraction of polyphosphatase activity that is necessary to mobilize polyP stores in response to phosphate scarcity. This is Zinc-dependent endopolyphosphatase from Saccharomyces cerevisiae (strain ATCC 204508 / S288c) (Baker's yeast).